Reading from the N-terminus, the 453-residue chain is Pup--protein ligase (453 aa).

E9 provides a ligand contact to Mg(2+). R53 is a binding site for ATP. Y55 lines the Mg(2+) pocket. The active-site Proton acceptor is D57. E63 is a binding site for Mg(2+). 2 residues coordinate ATP: T66 and W420.

This sequence belongs to the Pup ligase/Pup deamidase family. Pup-conjugating enzyme subfamily.

It carries out the reaction ATP + [prokaryotic ubiquitin-like protein]-L-glutamate + [protein]-L-lysine = ADP + phosphate + N(6)-([prokaryotic ubiquitin-like protein]-gamma-L-glutamyl)-[protein]-L-lysine.. It participates in protein degradation; proteasomal Pup-dependent pathway. Its pathway is protein modification; protein pupylation. Catalyzes the covalent attachment of the prokaryotic ubiquitin-like protein modifier Pup to the proteasomal substrate proteins, thereby targeting them for proteasomal degradation. This tagging system is termed pupylation. The ligation reaction involves the side-chain carboxylate of the C-terminal glutamate of Pup and the side-chain amino group of a substrate lysine. This chain is Pup--protein ligase, found in Streptomyces coelicolor (strain ATCC BAA-471 / A3(2) / M145).